We begin with the raw amino-acid sequence, 294 residues long: 4-hydroxy-tetrahydrodipicolinate synthase (294 aa).

Thr45 contacts pyruvate. Tyr133 (proton donor/acceptor) is an active-site residue. Lys161 functions as the Schiff-base intermediate with substrate in the catalytic mechanism. Position 203 (Ile203) interacts with pyruvate.

This sequence belongs to the DapA family. As to quaternary structure, homotetramer; dimer of dimers.

It is found in the cytoplasm. It catalyses the reaction L-aspartate 4-semialdehyde + pyruvate = (2S,4S)-4-hydroxy-2,3,4,5-tetrahydrodipicolinate + H2O + H(+). Its pathway is amino-acid biosynthesis; L-lysine biosynthesis via DAP pathway; (S)-tetrahydrodipicolinate from L-aspartate: step 3/4. Functionally, catalyzes the condensation of (S)-aspartate-beta-semialdehyde [(S)-ASA] and pyruvate to 4-hydroxy-tetrahydrodipicolinate (HTPA). In Buchnera aphidicola subsp. Acyrthosiphon pisum (strain APS) (Acyrthosiphon pisum symbiotic bacterium), this protein is 4-hydroxy-tetrahydrodipicolinate synthase.